Here is a 343-residue protein sequence, read N- to C-terminus: 4-hydroxy-2-oxovalerate aldolase (343 aa).

Positions 5–256 (ILLCDPTLRD…ETGIDLYKIL (252 aa)) constitute a Pyruvate carboxyltransferase domain. A substrate-binding site is contributed by 13–14 (RD). Aspartate 14 is a binding site for Mn(2+). Histidine 17 serves as the catalytic Proton acceptor. Positions 168 and 195 each coordinate substrate. Residues histidine 195 and histidine 197 each coordinate Mn(2+).

The protein belongs to the 4-hydroxy-2-oxovalerate aldolase family. Interacts with MhpF.

The catalysed reaction is (S)-4-hydroxy-2-oxopentanoate = acetaldehyde + pyruvate. The protein operates within aromatic compound metabolism; 3-phenylpropanoate degradation. Functionally, catalyzes the retro-aldol cleavage of 4-hydroxy-2-oxopentanoate to pyruvate and acetaldehyde. Is involved in the meta-cleavage pathway for the degradation of aromatic compounds. The chain is 4-hydroxy-2-oxovalerate aldolase from Pectobacterium atrosepticum (strain SCRI 1043 / ATCC BAA-672) (Erwinia carotovora subsp. atroseptica).